A 180-amino-acid chain; its full sequence is Ribulose bisphosphate carboxylase small subunit, chloroplastic 4 (180 aa).

A chloroplast-targeting transit peptide spans 1-56 (MASSIVSSAAVATRGNGAQASMVAPFTGLKSTASFPVSRKQNLDITSIASNGGRVS).

It belongs to the RuBisCO small chain family. In terms of assembly, heterohexadecamer of 8 large and 8 small subunits. (Microbial infection) Binds to tobamovirus movement protein; this interaction seems required for viral systemic movement.

The protein resides in the plastid. Its subcellular location is the chloroplast. It is found in the cell junction. It localises to the plasmodesma. In terms of biological role, ruBisCO catalyzes two reactions: the carboxylation of D-ribulose 1,5-bisphosphate, the primary event in carbon dioxide fixation, as well as the oxidative fragmentation of the pentose substrate. Both reactions occur simultaneously and in competition at the same active site. Although the small subunit is not catalytic it is essential for maximal activity. Involved in antiviral defenses. This is Ribulose bisphosphate carboxylase small subunit, chloroplastic 4 from Solanum lycopersicum (Tomato).